Reading from the N-terminus, the 661-residue chain is Galactan 5-O-arabinofuranosyltransferase (661 aa).

Transmembrane regions (helical) follow at residues 26-46, 64-84, 108-128, 194-214, 217-237, 243-263, 265-285, 286-306, 312-332, 362-382, 393-413, 418-438, and 458-478; these read LVAIVGAAILAFAFALVLWMG, VASATIAAVLIVTGFLTWLWL, ALTYLASYLSPAALVVAVLAI, AFQPWAIVSMAVAASVLVPVW, ITGSLPVATGIALVTTCIILA, PYAAIVAMGIPAMLVLASRIA, GDKFALAGGIIYLGVSATFYT, LFTGAIALSAVAVCIVVAAIV, PLLWLAVLGGGSIVIALISWG, VPFLASSVVGLLCLVGLIYLV, MWVGIAVFYAWMGMSMAITLL, LGFRLDTVLVLIFATAGVLGI, and TATHLTNLIVVLVLLGGLYYA.

Belongs to the glycosyltransferase 85 family.

The protein resides in the cell membrane. The enzyme catalyses Adds an alpha-D-arabinofuranosyl group from trans,octacis-decaprenylphospho-beta-D-arabinofuranose at the 5-O-position of the eighth, tenth and twelfth galactofuranose unit of the galactofuranan chain of [beta-D-galactofuranosyl-(1-&gt;5)-beta-D-galactofuranosyl-(1-&gt;6)]14-beta-D-galactofuranosyl-(1-&gt;5)-beta-D-galactofuranosyl-(1-&gt;4)-alpha-L-rhamnopyranosyl-(1-&gt;3)-N-acetyl-alpha-D-glucosaminyl-diphospho-trans,octacis-decaprenol.. It functions in the pathway cell wall biogenesis; cell wall polysaccharide biosynthesis. Involved in the biosynthesis of the arabinogalactan (AG) region of the mycolylarabinogalactan-peptidoglycan (mAGP) complex, an essential component of the cell wall. Catalyzes the addition of the first key arabinofuranosyl (Araf) residue from the sugar donor decaprenyl-phospho-arabinose (DPA) on the C-5 of a 6-linked galactofuranosyl (Galf) of the galactan domain, thus 'priming' the galactan for further elaboration by other arabinofuranosyltransferases. The protein is Galactan 5-O-arabinofuranosyltransferase of Corynebacterium glutamicum (strain ATCC 13032 / DSM 20300 / JCM 1318 / BCRC 11384 / CCUG 27702 / LMG 3730 / NBRC 12168 / NCIMB 10025 / NRRL B-2784 / 534).